The sequence spans 340 residues: HTH-type transcriptional repressor PurR (340 aa).

The region spanning 2–56 (ATIKDVAKLVGVSTTTVSHVINKTRFVAEDTTKAVWEAIASLNYSPSAVARSLKV) is the HTH lacI-type domain. A DNA-binding region (H-T-H motif) is located at residues 4 to 23 (IKDVAKLVGVSTTTVSHVIN). The DNA-binding element occupies 48–56 (SAVARSLKV). Hypoxanthine contacts are provided by Y73, K188, T190, F219, and D273.

Homodimer.

Its pathway is purine metabolism; purine nucleotide biosynthesis [regulation]. Is the main repressor of the genes involved in the de novo synthesis of purine nucleotides, regulating purB, purC, purEK, purF, purHD, purL, purMN and guaBA expression. PurR is allosterically activated to bind its cognate DNA by binding the purine corepressors, hypoxanthine or guanine, thereby effecting transcription repression. The chain is HTH-type transcriptional repressor PurR from Glaesserella parasuis serovar 5 (strain SH0165) (Haemophilus parasuis).